A 124-amino-acid chain; its full sequence is Large ribosomal subunit protein bL12 (124 aa).

This sequence belongs to the bacterial ribosomal protein bL12 family. As to quaternary structure, homodimer. Part of the ribosomal stalk of the 50S ribosomal subunit. Forms a multimeric L10(L12)X complex, where L10 forms an elongated spine to which 2 to 4 L12 dimers bind in a sequential fashion. Binds GTP-bound translation factors.

Its function is as follows. Forms part of the ribosomal stalk which helps the ribosome interact with GTP-bound translation factors. Is thus essential for accurate translation. The protein is Large ribosomal subunit protein bL12 of Cupriavidus pinatubonensis (strain JMP 134 / LMG 1197) (Cupriavidus necator (strain JMP 134)).